Reading from the N-terminus, the 363-residue chain is Cyclin-D1-1 (363 aa).

The segment at 39 to 77 (ELEREGEPAQGSSPSSSLSCAAAAAAAADDDDEDEDEHG) is disordered. Low complexity predominate over residues 50–65 (SSPSSSLSCAAAAAAA). The span at 66–75 (ADDDDEDEDE) shows a compositional bias: acidic residues.

This sequence belongs to the cyclin family. Cyclin D subfamily.

The polypeptide is Cyclin-D1-1 (CYCD1-1) (Oryza sativa subsp. japonica (Rice)).